Consider the following 332-residue polypeptide: tRNA uridine(34) hydroxylase (332 aa).

Positions 127–221 constitute a Rhodanese domain; it reads SDPETVLIDT…YLEEVPKEKS (95 aa). The active-site Cysteine persulfide intermediate is Cys181. The segment at 308–332 is disordered; that stretch reads AKKLAQLNKQKKQQAKEAARKKAQQ. Positions 321 to 332 are enriched in basic and acidic residues; it reads QAKEAARKKAQQ.

This sequence belongs to the TrhO family.

The catalysed reaction is uridine(34) in tRNA + AH2 + O2 = 5-hydroxyuridine(34) in tRNA + A + H2O. Functionally, catalyzes oxygen-dependent 5-hydroxyuridine (ho5U) modification at position 34 in tRNAs. This Francisella tularensis subsp. tularensis (strain FSC 198) protein is tRNA uridine(34) hydroxylase.